A 616-amino-acid polypeptide reads, in one-letter code: Dihydroxy-acid dehydratase (616 aa).

Aspartate 81 provides a ligand contact to Mg(2+). Cysteine 122 lines the [2Fe-2S] cluster pocket. Aspartate 123 and lysine 124 together coordinate Mg(2+). Lysine 124 carries the post-translational modification N6-carboxylysine. Cysteine 195 is a [2Fe-2S] cluster binding site. Position 491 (glutamate 491) interacts with Mg(2+). Catalysis depends on serine 517, which acts as the Proton acceptor.

Belongs to the IlvD/Edd family. As to quaternary structure, homodimer. It depends on [2Fe-2S] cluster as a cofactor. Mg(2+) is required as a cofactor.

The enzyme catalyses (2R)-2,3-dihydroxy-3-methylbutanoate = 3-methyl-2-oxobutanoate + H2O. It catalyses the reaction (2R,3R)-2,3-dihydroxy-3-methylpentanoate = (S)-3-methyl-2-oxopentanoate + H2O. It participates in amino-acid biosynthesis; L-isoleucine biosynthesis; L-isoleucine from 2-oxobutanoate: step 3/4. Its pathway is amino-acid biosynthesis; L-valine biosynthesis; L-valine from pyruvate: step 3/4. In terms of biological role, functions in the biosynthesis of branched-chain amino acids. Catalyzes the dehydration of (2R,3R)-2,3-dihydroxy-3-methylpentanoate (2,3-dihydroxy-3-methylvalerate) into 2-oxo-3-methylpentanoate (2-oxo-3-methylvalerate) and of (2R)-2,3-dihydroxy-3-methylbutanoate (2,3-dihydroxyisovalerate) into 2-oxo-3-methylbutanoate (2-oxoisovalerate), the penultimate precursor to L-isoleucine and L-valine, respectively. In Salmonella paratyphi A (strain ATCC 9150 / SARB42), this protein is Dihydroxy-acid dehydratase.